Consider the following 219-residue polypeptide: Lipoprotein-releasing system ATP-binding protein LolD (219 aa).

The 215-residue stretch at 5-219 (LKAGDIFKTY…KVVMQDGVII (215 aa)) folds into the ABC transporter domain. 37–44 (GASGAGKS) serves as a coordination point for ATP.

The protein belongs to the ABC transporter superfamily. Lipoprotein translocase (TC 3.A.1.125) family. As to quaternary structure, the complex is composed of two ATP-binding proteins (LolD) and two transmembrane proteins (LolC and LolE).

Its subcellular location is the cell inner membrane. Functionally, part of the ABC transporter complex LolCDE involved in the translocation of mature outer membrane-directed lipoproteins, from the inner membrane to the periplasmic chaperone, LolA. Responsible for the formation of the LolA-lipoprotein complex in an ATP-dependent manner. The polypeptide is Lipoprotein-releasing system ATP-binding protein LolD (Cytophaga hutchinsonii (strain ATCC 33406 / DSM 1761 / CIP 103989 / NBRC 15051 / NCIMB 9469 / D465)).